The primary structure comprises 232 residues: Pseudaminic acid cytidylyltransferase (232 aa).

The protein belongs to the CMP-NeuNAc synthase family. Mg(2+) serves as cofactor.

It catalyses the reaction pseudaminate + CTP = CMP-pseudaminate + diphosphate. Catalyzes the final step in the biosynthesis of pseudaminic acid, a sialic-acid-like sugar that is used to modify flagellin. Mediates the activation of pseudaminic acid with CMP by forming CMP-pseudaminic acid. In Campylobacter jejuni subsp. jejuni serotype O:23/36 (strain 81-176), this protein is Pseudaminic acid cytidylyltransferase (pseF).